Here is a 331-residue protein sequence, read N- to C-terminus: FMRFamide-related neuropeptides (331 aa).

A signal peptide spans 1-25 (MRCWSPCSLLVVIAIYCLSSHTSEA). Positions 26 to 65 (FDLAQACVESQRLSLLPICDTIFAVQQEGAQQSADDGLRS) are excised as a propeptide. 2 positions are modified to phenylalanine amide: F71 and F83. Positions 86–94 (NVPDLPFED) are excised as a propeptide. The residue at position 100 (F100) is a Phenylalanine amide. A propeptide spanning residues 103 to 168 (AAPQLDDLLK…YVDDVEDSDV (66 aa)) is cleaved from the precursor. The segment at 122 to 153 (QKSDDTSVRRKRSTDAAPQSNTDSAEQKNDSA) is disordered. Phenylalanine amide occurs at positions 174 and 181. Positions 184–194 (NPSDVGSKLTE) are excised as a propeptide. The residue at position 200 (F200) is a Phenylalanine amide. Positions 203–205 (DPE) are excised as a propeptide. F211 carries the phenylalanine amide modification. Positions 214–216 (SDD) are excised as a propeptide. The residue at position 222 (F222) is a Phenylalanine amide. Residues 225–236 (NPGDAEDELEED) constitute a propeptide that is removed on maturation. F242 carries the phenylalanine amide modification. The propeptide occupies 245–254 (GDEEDEEEAE). At F260 the chain carries Phenylalanine amide. Residues 263 to 265 (DPE) constitute a propeptide that is removed on maturation. F271 carries the phenylalanine amide modification. The propeptide occupies 274-277 (NGEE). Position 283 is a phenylalanine amide (F283). Residues 286 to 293 (NPEEPEAD) constitute a propeptide that is removed on maturation. Phenylalanine amide is present on F299. Residues 302–312 (GGEEDDVNTEE) constitute a propeptide that is removed on maturation. Position 318 is a phenylalanine amide (F318). Positions 321 to 331 (SAEKCKGCLEG) are excised as a propeptide.

It belongs to the FARP (FMRFamide related peptide) family. In terms of tissue distribution, present ubiquitously in the brain and regions of the central nervous system as well as in the periphery and throughout the dermal chromatophore layer (at protein level).

It localises to the secreted. Its function is as follows. Excitatory neurotransmitters that directly modulate chromatophore function by activating chromatophore expansion at the chromatophore neuromuscular junction. This chain is FMRFamide-related neuropeptides, found in Sepia officinalis (Common cuttlefish).